A 661-amino-acid chain; its full sequence is Threonine--tRNA ligase (661 aa).

One can recognise a TGS domain in the interval 1-64 (MSHSVSLTFP…ADGKIEIVTR (64 aa)). The interval 245 to 547 (DHRRLGREMD…LLENYAGHMP (303 aa)) is catalytic. C341, H392, and H524 together coordinate Zn(2+).

This sequence belongs to the class-II aminoacyl-tRNA synthetase family. Homodimer. Requires Zn(2+) as cofactor.

Its subcellular location is the cytoplasm. The catalysed reaction is tRNA(Thr) + L-threonine + ATP = L-threonyl-tRNA(Thr) + AMP + diphosphate + H(+). Its function is as follows. Catalyzes the attachment of threonine to tRNA(Thr) in a two-step reaction: L-threonine is first activated by ATP to form Thr-AMP and then transferred to the acceptor end of tRNA(Thr). Also edits incorrectly charged L-seryl-tRNA(Thr). This chain is Threonine--tRNA ligase, found in Sinorhizobium fredii (strain NBRC 101917 / NGR234).